The following is a 126-amino-acid chain: Histone H2B 3 (126 aa).

The span at 1–12 (MPEPAKSAPAPK) shows a compositional bias: low complexity. The tract at residues 1–34 (MPEPAKSAPAPKKGSKKAVTKTQKKGDKKRRKTR) is disordered. 2 positions are modified to N6-acetyllysine: Lys-6 and Lys-13. A compositionally biased stretch (basic residues) spans 13–34 (KGSKKAVTKTQKKGDKKRRKTR). Ser-15 is modified (phosphoserine). An N6-acetyllysine mark is found at Lys-16 and Lys-21. Ser-113 carries O-linked (GlcNAc) serine glycosylation. Residue Lys-121 forms a Glycyl lysine isopeptide (Lys-Gly) (interchain with G-Cter in ubiquitin) linkage.

The protein belongs to the histone H2B family. In terms of assembly, the nucleosome is a histone octamer containing two molecules each of H2A, H2B, H3 and H4 assembled in one H3-H4 heterotetramer and two H2A-H2B heterodimers. The octamer wraps approximately 147 bp of DNA. Monoubiquitination of Lys-121 by the BRE1 gives a specific tag for epigenetic transcriptional activation and is also prerequisite for histone H3 'Lys-4' and 'Lys-79' methylation. Post-translationally, phosphorylated on Ser-15 during apoptosis; which facilitates apoptotic chromatin condensation. In terms of processing, glcNAcylation at Ser-113 promotes monoubiquitination of Lys-121. It fluctuates in response to extracellular glucose, and associates with transcribed genes.

The protein localises to the nucleus. The protein resides in the chromosome. Functionally, core component of nucleosome. Nucleosomes wrap and compact DNA into chromatin, limiting DNA accessibility to the cellular machineries which require DNA as a template. Histones thereby play a central role in transcription regulation, DNA repair, DNA replication and chromosomal stability. DNA accessibility is regulated via a complex set of post-translational modifications of histones, also called histone code, and nucleosome remodeling. The protein is Histone H2B 3 (hist2h2l) of Danio rerio (Zebrafish).